Consider the following 216-residue polypeptide: Cytidylate kinase (216 aa).

10-18 (GPAAAGKST) is a binding site for ATP.

It belongs to the cytidylate kinase family. Type 1 subfamily.

It is found in the cytoplasm. The catalysed reaction is CMP + ATP = CDP + ADP. It catalyses the reaction dCMP + ATP = dCDP + ADP. This chain is Cytidylate kinase, found in Macrococcus caseolyticus (strain JCSC5402) (Macrococcoides caseolyticum).